Reading from the N-terminus, the 227-residue chain is Small ribosomal subunit protein uS3 (227 aa).

Positions 39-109 (IHRFFEKLTR…KIVINVDAVD (71 aa)) constitute a KH type-2 domain.

Belongs to the universal ribosomal protein uS3 family. As to quaternary structure, part of the 30S ribosomal subunit. Forms a tight complex with proteins S10 and S14.

Binds the lower part of the 30S subunit head. Binds mRNA in the 70S ribosome, positioning it for translation. This Mesomycoplasma hyopneumoniae (strain 232) (Mycoplasma hyopneumoniae) protein is Small ribosomal subunit protein uS3.